A 113-amino-acid chain; its full sequence is MEDTLSLAEAMEDLVSAEDFLDYFAVPYDPAVVHVNRLHILQRFHDYLAKQAPNLPPEESQQRGIYRLWLERAYQDFVTSDSLTEKVFAVFQTVSKPDGGMSSFVSLDKVFRQ.

This sequence belongs to the NifW family. In terms of assembly, homotrimer; associates with NifD.

May protect the nitrogenase Fe-Mo protein from oxidative damage. This is Nitrogenase-stabilizing/protective protein NifW from Dechloromonas aromatica (strain RCB).